The sequence spans 435 residues: Serine--tRNA ligase (435 aa).

Residue 241–243 (TAE) coordinates L-serine. 272–274 (RSE) provides a ligand contact to ATP. Glu295 contacts L-serine. An ATP-binding site is contributed by 359–362 (EISS). An L-serine-binding site is contributed by Ser395.

The protein belongs to the class-II aminoacyl-tRNA synthetase family. Type-1 seryl-tRNA synthetase subfamily. As to quaternary structure, homodimer. The tRNA molecule binds across the dimer.

Its subcellular location is the cytoplasm. It catalyses the reaction tRNA(Ser) + L-serine + ATP = L-seryl-tRNA(Ser) + AMP + diphosphate + H(+). It carries out the reaction tRNA(Sec) + L-serine + ATP = L-seryl-tRNA(Sec) + AMP + diphosphate + H(+). It functions in the pathway aminoacyl-tRNA biosynthesis; selenocysteinyl-tRNA(Sec) biosynthesis; L-seryl-tRNA(Sec) from L-serine and tRNA(Sec): step 1/1. In terms of biological role, catalyzes the attachment of serine to tRNA(Ser). Is also able to aminoacylate tRNA(Sec) with serine, to form the misacylated tRNA L-seryl-tRNA(Sec), which will be further converted into selenocysteinyl-tRNA(Sec). The polypeptide is Serine--tRNA ligase (Actinobacillus pleuropneumoniae serotype 5b (strain L20)).